The chain runs to 175 residues: Arsenite oxidase subunit AioB (175 aa).

Residues 1–32 constitute a signal peptide (tat-type signal); that stretch reads MSDTINLTRRGFLKVSGSGVAVAATLSPIASA. In terms of domain architecture, Rieske spans 62–158; sequence NEPVSFTYPD…LRYDEASDAL (97 aa). [2Fe-2S] cluster-binding residues include cysteine 102, histidine 104, cysteine 120, and histidine 123. A disulfide bond links cysteine 107 and cysteine 122.

It belongs to the AOX family. Heterodimer consisting of a large and a small subunit. It depends on [2Fe-2S] cluster as a cofactor. Post-translationally, predicted to be exported by the Tat system. The position of the signal peptide cleavage has not been experimentally proven.

The catalysed reaction is 2 oxidized [azurin] + arsenite + H2O = 2 reduced [azurin] + arsenate + 3 H(+). Functionally, involved in the detoxification of arsenic. Oxidizes As(III)O3(3-) (arsenite) to the somewhat less toxic As(V)O4(3-) (arsenate). In Alcaligenes faecalis, this protein is Arsenite oxidase subunit AioB (aioB).